Consider the following 611-residue polypeptide: DNA mismatch repair protein MutL (611 aa).

This sequence belongs to the DNA mismatch repair MutL/HexB family.

In terms of biological role, this protein is involved in the repair of mismatches in DNA. It is required for dam-dependent methyl-directed DNA mismatch repair. May act as a 'molecular matchmaker', a protein that promotes the formation of a stable complex between two or more DNA-binding proteins in an ATP-dependent manner without itself being part of a final effector complex. The chain is DNA mismatch repair protein MutL from Bartonella bacilliformis (strain ATCC 35685 / KC583 / Herrer 020/F12,63).